The sequence spans 624 residues: Chaperone protein HtpG (624 aa).

The segment at 1–336 is a; substrate-binding; the sequence is MKTQKKEVYN…SSDLPLNISR (336 aa). Positions 337-552 are b; sequence EILQDNSITE…STEMTTQMAK (216 aa). Positions 553 to 624 are c; the sequence is LFSAAGQSVP…ISRMNKLLIK (72 aa).

This sequence belongs to the heat shock protein 90 family. In terms of assembly, homodimer.

The protein resides in the cytoplasm. In terms of biological role, molecular chaperone. Has ATPase activity. In Buchnera aphidicola subsp. Acyrthosiphon pisum (strain APS) (Acyrthosiphon pisum symbiotic bacterium), this protein is Chaperone protein HtpG.